The sequence spans 118 residues: Large ribosomal subunit protein uL24 (118 aa).

Belongs to the universal ribosomal protein uL24 family. As to quaternary structure, part of the 50S ribosomal subunit.

In terms of biological role, one of two assembly initiator proteins, it binds directly to the 5'-end of the 23S rRNA, where it nucleates assembly of the 50S subunit. Functionally, one of the proteins that surrounds the polypeptide exit tunnel on the outside of the subunit. This Prochlorococcus marinus (strain NATL2A) protein is Large ribosomal subunit protein uL24.